The sequence spans 1777 residues: Non-reducing polyketide synthase nscA (1777 aa).

Positions 27 to 261 are N-terminal acylcarrier protein transacylase domain (SAT); the sequence is DLFRRLDQHS…PLPVYDGLCH (235 aa). Positions 396 to 829 constitute a Ketosynthase family 3 (KS3) domain; sequence SSKLAIVGMA…GGNTTLLLED (434 aa). Residues C569, H704, and H747 each act as for beta-ketoacyl synthase activity in the active site. A malonyl-CoA:ACP transacylase (MAT) domain region spans residues 934 to 1212; that stretch reads AFTGQGAYYH…SAIPSCRRNE (279 aa). A product template (PT) domain region spans residues 1297–1616; sequence TSLVHQITAE…RLLMDRFFSP (320 aa). The segment at 1301 to 1437 is N-terminal hotdog fold; it reads HQITAETVEA…ATIRFEDPEA (137 aa). In terms of domain architecture, PKS/mFAS DH spans 1301–1611; it reads HQITAETVEA…FRRVPRLLMD (311 aa). H1333 (proton acceptor; for dehydratase activity) is an active-site residue. Residues 1465–1611 form a C-terminal hotdog fold region; the sequence is ASRLSKPLAY…FRRVPRLLMD (147 aa). The active-site Proton donor; for dehydratase activity is the D1522. The disordered stretch occupies residues 1674 to 1704; sequence LLATSSKSSTPKESPIVTPAESERAEPVDNS. Residues 1677 to 1688 show a composition bias toward low complexity; sequence TSSKSSTPKESP. Residues 1700-1777 form the Carrier domain; the sequence is PVDNSMTSQC…EMTAWIEEYC (78 aa). The residue at position 1737 (S1737) is an O-(pantetheine 4'-phosphoryl)serine.

It depends on pantetheine 4'-phosphate as a cofactor.

It functions in the pathway secondary metabolite biosynthesis. Non-reducing polyketide synthase; part of the gene cluster that mediates the biosynthesis of neosartoricin B, a prenylated anthracenone that probably exhibits T-cell antiproliferative activity, suggestive of a physiological role as an immunosuppressive agent. The non-reducing polyketide synthase nscA probably synthesizes and cyclizes the decaketide backbone. The hydrolase nscB then mediates the product release through hydrolysis followed by spontaneous decarboxylation. The prenyltransferase nscD catalyzes the addition of the dimethylallyl group to the aromatic C5. The FAD-dependent monooxygenase nscC is then responsible for the stereospecific hydroxylation at C2. Neosartoricin B can be converted into two additional compounds neosartoricins C and D. Neosartoricin C is a spirocyclic compound that is cyclized through the attack of C3 hydroxyl on C14, followed by dehydration. On the other hand, neosartoricin D is a further cyclized compound in which attack of C2 on C14 in neosartoricin C results in the formation of the acetal-containing dioxabicyclo-octanone ring. Both of these compounds are novel and possibly represent related metabolites of the gene cluster. In Trichophyton equinum (strain ATCC MYA-4606 / CBS 127.97) (Horse ringworm fungus), this protein is Non-reducing polyketide synthase nscA.